A 306-amino-acid chain; its full sequence is Homoserine kinase (306 aa).

88-98 (PLARGLGSSAT) serves as a coordination point for ATP.

It belongs to the GHMP kinase family. Homoserine kinase subfamily.

Its subcellular location is the cytoplasm. It catalyses the reaction L-homoserine + ATP = O-phospho-L-homoserine + ADP + H(+). The protein operates within amino-acid biosynthesis; L-threonine biosynthesis; L-threonine from L-aspartate: step 4/5. Functionally, catalyzes the ATP-dependent phosphorylation of L-homoserine to L-homoserine phosphate. This chain is Homoserine kinase, found in Synechococcus sp. (strain ATCC 27144 / PCC 6301 / SAUG 1402/1) (Anacystis nidulans).